The chain runs to 396 residues: Putative F-box protein At4g22660 (396 aa).

Residues 7–58 (PNTWSDLPLDLLNLVFKRLSFANFRQAKSVCSSWYSASKQSVPKNQIPWLML) enclose the F-box domain.

The chain is Putative F-box protein At4g22660 from Arabidopsis thaliana (Mouse-ear cress).